The sequence spans 254 residues: D-aminoacyl-tRNA deacylase (254 aa).

Residues 61 to 85 (KPTLTVHTPGNLTEDNSRGGNSEEI) form a disordered region. Residues 65–84 (TVHTPGNLTEDNSRGGNSEE) show a composition bias toward polar residues.

This sequence belongs to the DtdA deacylase family. As to quaternary structure, monomer. Zn(2+) is required as a cofactor.

It catalyses the reaction a D-aminoacyl-tRNA + H2O = a tRNA + a D-alpha-amino acid + H(+). The enzyme catalyses glycyl-tRNA(Ala) + H2O = tRNA(Ala) + glycine + H(+). Functionally, D-aminoacyl-tRNA deacylase with broad substrate specificity. By recycling D-aminoacyl-tRNA to D-amino acids and free tRNA molecules, this enzyme counteracts the toxicity associated with the formation of D-aminoacyl-tRNA entities in vivo. This chain is D-aminoacyl-tRNA deacylase, found in Methanococcus maripaludis (strain C5 / ATCC BAA-1333).